The primary structure comprises 84 residues: Small ribosomal subunit protein uS17 (84 aa).

This sequence belongs to the universal ribosomal protein uS17 family. In terms of assembly, part of the 30S ribosomal subunit.

Functionally, one of the primary rRNA binding proteins, it binds specifically to the 5'-end of 16S ribosomal RNA. This Borrelia hermsii (strain HS1 / DAH) protein is Small ribosomal subunit protein uS17.